The following is a 239-amino-acid chain: Small ribosomal subunit protein uS2 (239 aa).

It belongs to the universal ribosomal protein uS2 family.

The sequence is that of Small ribosomal subunit protein uS2 from Francisella tularensis subsp. novicida (strain U112).